The sequence spans 747 residues: 3',5'-cyclic-AMP phosphodiesterase 4D (747 aa).

The interval 1–28 (MERDTCDVLSRSKSASEETLHSCNEEED) is disordered. A compositionally biased stretch (basic and acidic residues) spans 14 to 24 (SASEETLHSCN). Ser238, Ser240, Ser287, and Ser314 each carry phosphoserine. The interval 282–302 (EVEIPSPTQKEKEKKKRPMSQ) is disordered. Residues 325–654 (VKTEQEDVLA…EWYQSTIPQS (330 aa)) form the PDEase domain. Lys326 is covalently cross-linked (Glycyl lysine isopeptide (Lys-Gly) (interchain with G-Cter in SUMO)). The active-site Proton donor is the His401. His401 provides a ligand contact to 3',5'-cyclic AMP. His401 contacts AMP. Zn(2+)-binding residues include His405, His441, Asp442, and Asp559. AMP-binding residues include Asp442, Asp559, Asn562, Gln610, and Phe613. A Mg(2+)-binding site is contributed by Asp442. Asp442 contributes to the Mn(2+) binding site. 3',5'-cyclic AMP-binding residues include Gln610 and Phe613. Residues 649–747 (STIPQSPSPA…CVPDDCCPDT (99 aa)) are disordered. A compositionally biased stretch (polar residues) spans 701 to 712 (CSDSKTLCTQDS). Positions 718–734 (PLDEQVEEEAVAEEESQ) are enriched in acidic residues.

It belongs to the cyclic nucleotide phosphodiesterase family. PDE4 subfamily. Homodimer for the long isoforms. Isoforms with truncated N-termini are monomeric. Binds ARRB2. Interacts with PDE4DIP. Identified in a complex composed of RYR1, PDE4D, PKA, FKBP1A and protein phosphatase 1 (PP1). Interacts (via N-terminal region) with SHANK2 (via proline-rich region); the interaction is increased in a PKA-dependent manner. The cofactor is Zn(2+). It depends on Mg(2+) as a cofactor. Mn(2+) is required as a cofactor. In terms of processing, sumoylation of long isoforms by PIAS4 augments their activation by PKA phosphorylation and represses their inhibition by ERK phosphorylation. As to expression, expressed in brain (at protein level). Isoform 7 is detected in heart, brain, lung, kidney and testis.

The protein resides in the cytoplasm. It localises to the membrane. It is found in the cytoskeleton. Its subcellular location is the microtubule organizing center. The protein localises to the centrosome. The protein resides in the apical cell membrane. The enzyme catalyses 3',5'-cyclic AMP + H2O = AMP + H(+). It functions in the pathway purine metabolism; 3',5'-cyclic AMP degradation; AMP from 3',5'-cyclic AMP: step 1/1. Its activity is regulated as follows. Inhibited by rolipram. Activated by phosphatidic acid. Functionally, hydrolyzes the second messenger cAMP, which is a key regulator of many important physiological processes. The chain is 3',5'-cyclic-AMP phosphodiesterase 4D (Pde4d) from Mus musculus (Mouse).